Reading from the N-terminus, the 476-residue chain is Aspartyl/glutamyl-tRNA(Asn/Gln) amidotransferase subunit B (476 aa).

It belongs to the GatB/GatE family. GatB subfamily. As to quaternary structure, heterotrimer of A, B and C subunits.

It catalyses the reaction L-glutamyl-tRNA(Gln) + L-glutamine + ATP + H2O = L-glutaminyl-tRNA(Gln) + L-glutamate + ADP + phosphate + H(+). It carries out the reaction L-aspartyl-tRNA(Asn) + L-glutamine + ATP + H2O = L-asparaginyl-tRNA(Asn) + L-glutamate + ADP + phosphate + 2 H(+). In terms of biological role, allows the formation of correctly charged Asn-tRNA(Asn) or Gln-tRNA(Gln) through the transamidation of misacylated Asp-tRNA(Asn) or Glu-tRNA(Gln) in organisms which lack either or both of asparaginyl-tRNA or glutaminyl-tRNA synthetases. The reaction takes place in the presence of glutamine and ATP through an activated phospho-Asp-tRNA(Asn) or phospho-Glu-tRNA(Gln). This chain is Aspartyl/glutamyl-tRNA(Asn/Gln) amidotransferase subunit B, found in Enterococcus faecalis (strain ATCC 700802 / V583).